We begin with the raw amino-acid sequence, 162 residues long: Translocator protein 2 (162 aa).

The next 5 helical transmembrane spans lie at 3–23 (LQGP…CMLI), 44–64 (VILL…YLVW), 79–99 (LGLY…FLAA), 103–123 (GLAL…VFIW), and 129–149 (LAAL…AITY).

It belongs to the TspO/BZRP family. Homotetramer. May also form homodimer. As to expression, expressed in liver, bone marrow and spleen. In spleen, detected in red pulp but not in white pulp.

The protein resides in the endoplasmic reticulum membrane. The protein localises to the cell membrane. Functionally, cholesterol-binding protein involved in the redistribution of cholesterol from lipid droplets to the endoplasmic reticulum. Required to meet cholesterol demands during erythropoietic differentiation. May play a role in transport processes at the plasma membrane of erythrocytes, including regulating VDAC-mediated ATP export, and import of the heme precursors protoporphyrin IX and 5-aminolevulinic acid. This is Translocator protein 2 (Tspo2) from Mus musculus (Mouse).